Consider the following 216-residue polypeptide: Somatotropin (216 aa).

The signal sequence occupies residues 1-25; that stretch reads MAPGSWFSPLLIAVVTLGLPQGAAA. H45 is a binding site for Zn(2+). C78 and C189 are disulfide-bonded. Position 198 (E198) interacts with Zn(2+). C206 and C214 are disulfide-bonded.

The protein belongs to the somatotropin/prolactin family. Pituitary gland.

The protein resides in the secreted. Its function is as follows. Growth hormone plays an important role in growth control. The chain is Somatotropin (GH) from Meleagris gallopavo (Wild turkey).